The chain runs to 465 residues: tRNA-2-methylthio-N(6)-dimethylallyladenosine synthase (465 aa).

In terms of domain architecture, MTTase N-terminal spans 18–136 (RKLYIETYGC…LPNLVGAAEQ (119 aa)). Positions 27, 63, 100, 174, 178, and 181 each coordinate [4Fe-4S] cluster. Residues 160–392 (GGVHINGFVS…IALQNRLSEE (233 aa)) enclose the Radical SAM core domain. In terms of domain architecture, TRAM spans 395 to 458 (KRDISKTFEV…SATLFGEVVE (64 aa)).

This sequence belongs to the methylthiotransferase family. MiaB subfamily. Monomer. It depends on [4Fe-4S] cluster as a cofactor.

It localises to the cytoplasm. The enzyme catalyses N(6)-dimethylallyladenosine(37) in tRNA + (sulfur carrier)-SH + AH2 + 2 S-adenosyl-L-methionine = 2-methylsulfanyl-N(6)-dimethylallyladenosine(37) in tRNA + (sulfur carrier)-H + 5'-deoxyadenosine + L-methionine + A + S-adenosyl-L-homocysteine + 2 H(+). Catalyzes the methylthiolation of N6-(dimethylallyl)adenosine (i(6)A), leading to the formation of 2-methylthio-N6-(dimethylallyl)adenosine (ms(2)i(6)A) at position 37 in tRNAs that read codons beginning with uridine. The sequence is that of tRNA-2-methylthio-N(6)-dimethylallyladenosine synthase from Porphyromonas gingivalis (strain ATCC 33277 / DSM 20709 / CIP 103683 / JCM 12257 / NCTC 11834 / 2561).